A 396-amino-acid polypeptide reads, in one-letter code: Glycerate kinase (396 aa).

Belongs to the glycerate kinase type-2 family.

It is found in the cytoplasm. It catalyses the reaction (R)-glycerate + ATP = (2R)-3-phosphoglycerate + ADP + H(+). The sequence is that of Glycerate kinase (GLYCTK) from Macaca fascicularis (Crab-eating macaque).